The following is a 437-amino-acid chain: Isthmin-2 (437 aa).

An N-terminal signal peptide occupies residues 1 to 25 (MLRARKGLWVLLSVLLAFWIERAIS). Residues 156–191 (DSGEDGTGQAEDEEDDYDYDSGEPIPSGLGKTDGDW) are disordered. Residues 165-176 (AEDEEDDYDYDS) show a composition bias toward acidic residues. A TSP type-1 domain is found at 197 to 242 (EEKEEEWSTWSPCSVTCGHGNQTRSRSCGDFCTSTESQSCDLVPCP). 3 cysteine pairs are disulfide-bonded: cysteine 209–cysteine 236, cysteine 213–cysteine 241, and cysteine 224–cysteine 228. N-linked (GlcNAc...) asparagine glycosylation is present at asparagine 217. N-linked (GlcNAc...) asparagine glycans are attached at residues asparagine 258 and asparagine 349. One can recognise an AMOP domain in the interval 262–425 (PYGTDVGSCE…LHCMENPQQD (164 aa)).

This sequence belongs to the isthmin family.

The protein resides in the secreted. In Danio rerio (Zebrafish), this protein is Isthmin-2 (ism2).